A 201-amino-acid chain; its full sequence is Recombination protein RecR (201 aa).

The segment at Cys60–Cys75 adopts a C4-type zinc-finger fold. The Toprim domain occupies Ser83 to Pro178.

It belongs to the RecR family.

May play a role in DNA repair. It seems to be involved in an RecBC-independent recombinational process of DNA repair. It may act with RecF and RecO. This is Recombination protein RecR from Methylocella silvestris (strain DSM 15510 / CIP 108128 / LMG 27833 / NCIMB 13906 / BL2).